The following is a 465-amino-acid chain: ATP synthase subunit beta (465 aa).

ATP is bound at residue 148–155 (GGAGVGKT).

The protein belongs to the ATPase alpha/beta chains family. In terms of assembly, F-type ATPases have 2 components, CF(1) - the catalytic core - and CF(0) - the membrane proton channel. CF(1) has five subunits: alpha(3), beta(3), gamma(1), delta(1), epsilon(1). CF(0) has three main subunits: a(1), b(2) and c(9-12). The alpha and beta chains form an alternating ring which encloses part of the gamma chain. CF(1) is attached to CF(0) by a central stalk formed by the gamma and epsilon chains, while a peripheral stalk is formed by the delta and b chains.

The protein resides in the cell inner membrane. It carries out the reaction ATP + H2O + 4 H(+)(in) = ADP + phosphate + 5 H(+)(out). Produces ATP from ADP in the presence of a proton gradient across the membrane. The catalytic sites are hosted primarily by the beta subunits. This is ATP synthase subunit beta from Neisseria meningitidis serogroup C (strain 053442).